Reading from the N-terminus, the 206-residue chain is MTFEWWFAYLLTSTLLSLSPGSGAINTMTTSINHGYRGAVASIAGLQTGLGIHIVLVGVGLGTLFSRSLLAFEILKWAGAAYLIWLGIQQWRAAGAIDLHTLAQTQSRGRLFKRAIFVNLTNPKSIVFLAALFPQFIMPQQPQLAQYLILGVTTIVVDMVVMTGYATLAQRIAAWIKGPKQMKALNKAFGSLFMLVGALLASARHA.

The next 6 helical transmembrane spans lie at 5–25 (WWFAYLLTSTLLSLSPGSGAI), 45–65 (GLQTGLGIHIVLVGVGLGTLF), 68–88 (SLLAFEILKWAGAAYLIWLGI), 117–137 (FVNLTNPKSIVFLAALFPQFI), 148–168 (LILGVTTIVVDMVVMTGYATL), and 182–202 (MKALNKAFGSLFMLVGALLAS).

The protein belongs to the Rht family.

The protein resides in the cell membrane. Its function is as follows. Conducts the efflux of homoserine and homoserine lactone. This is Homoserine/homoserine lactone efflux protein (rhtB) from Salmonella typhimurium (strain LT2 / SGSC1412 / ATCC 700720).